The following is a 285-amino-acid chain: Acetyl-coenzyme A carboxylase carboxyl transferase subunit beta 2 (285 aa).

Positions 1-20 (MAIRSLFSGNRKKKEDGQEK) are disordered. Residues 26–285 (LMTKCPECRH…MHTKGGVQHV (260 aa)) enclose the CoA carboxyltransferase N-terminal domain. The Zn(2+) site is built by C30, C33, C49, and C52. The segment at 30–52 (CPECRHIQLTKELEKNHKVCTKC) adopts a C4-type zinc-finger fold.

Belongs to the AccD/PCCB family. As to quaternary structure, acetyl-CoA carboxylase is a heterohexamer composed of biotin carboxyl carrier protein (AccB), biotin carboxylase (AccC) and two subunits each of ACCase subunit alpha (AccA) and ACCase subunit beta (AccD). Requires Zn(2+) as cofactor.

The protein localises to the cytoplasm. It carries out the reaction N(6)-carboxybiotinyl-L-lysyl-[protein] + acetyl-CoA = N(6)-biotinyl-L-lysyl-[protein] + malonyl-CoA. It participates in lipid metabolism; malonyl-CoA biosynthesis; malonyl-CoA from acetyl-CoA: step 1/1. Component of the acetyl coenzyme A carboxylase (ACC) complex. Biotin carboxylase (BC) catalyzes the carboxylation of biotin on its carrier protein (BCCP) and then the CO(2) group is transferred by the transcarboxylase to acetyl-CoA to form malonyl-CoA. The chain is Acetyl-coenzyme A carboxylase carboxyl transferase subunit beta 2 from Lysinibacillus sphaericus (strain C3-41).